The primary structure comprises 143 residues: Large ribosomal subunit protein uL11 (143 aa).

The protein belongs to the universal ribosomal protein uL11 family. Part of the ribosomal stalk of the 50S ribosomal subunit. Interacts with L10 and the large rRNA to form the base of the stalk. L10 forms an elongated spine to which L12 dimers bind in a sequential fashion forming a multimeric L10(L12)X complex. Post-translationally, one or more lysine residues are methylated.

Its function is as follows. Forms part of the ribosomal stalk which helps the ribosome interact with GTP-bound translation factors. The sequence is that of Large ribosomal subunit protein uL11 from Alkalilimnicola ehrlichii (strain ATCC BAA-1101 / DSM 17681 / MLHE-1).